The following is a 1049-amino-acid chain: Exotoxin PaxA (1049 aa).

Transmembrane regions (helical) follow at residues 246–266, 311–331, 375–395, and 397–417; these read GLGL…FTLA, GPAA…LSFL, ITTI…ASAG, and LVGA…SGIL. 6 Hemolysin-type calcium-binding repeats span residues 744–761, 762–779, 780–797, 798–815, 826–843, and 844–861; these read KGSK…DDLL, NGND…NDEL, RGDN…NDKL, FGGN…DDEL, RGGK…SDFL, and DGGE…NDFY.

Belongs to the RTX prokaryotic toxin (TC 1.C.11) family.

The protein localises to the secreted. Its subcellular location is the host cell membrane. Its function is as follows. PaxA is associated with abortion cases in swine and septicemia in young piglets. Shows cohemolytic activity with the sphingomyelinase of S.aureus but is devoid of direct hemolytic activity. This chain is Exotoxin PaxA (paxA), found in Pasteurella aerogenes.